The sequence spans 121 residues: Dihydroneopterin aldolase (121 aa).

Substrate-binding positions include Glu-22, Tyr-54, and 73-74 (LE). Lys-100 serves as the catalytic Proton donor/acceptor.

This sequence belongs to the DHNA family. As to quaternary structure, homooctamer. Four molecules assemble into a ring, and two rings come together to give a cylinder with a hole of at least 13 a diameter.

The enzyme catalyses 7,8-dihydroneopterin = 6-hydroxymethyl-7,8-dihydropterin + glycolaldehyde. It catalyses the reaction 7,8-dihydroneopterin = 7,8-dihydromonapterin. The protein operates within cofactor biosynthesis; tetrahydrofolate biosynthesis; 2-amino-4-hydroxy-6-hydroxymethyl-7,8-dihydropteridine diphosphate from 7,8-dihydroneopterin triphosphate: step 3/4. In terms of biological role, catalyzes the conversion of 7,8-dihydroneopterin to 6-hydroxymethyl-7,8-dihydropterin. Can also catalyze the epimerization of carbon 2' of dihydroneopterin to dihydromonapterin. In Staphylococcus aureus (strain COL), this protein is Dihydroneopterin aldolase (folB).